Here is a 400-residue protein sequence, read N- to C-terminus: Enoyl-[acyl-carrier-protein] reductase [NADH] 2 (400 aa).

Residues 48 to 53 (GASSGF), 75 to 76 (FE), 112 to 113 (DA), and 141 to 142 (LA) each bind NAD(+). Residue Tyr228 participates in substrate binding. Tyr238 (proton donor) is an active-site residue. NAD(+)-binding positions include Lys247 and 276-278 (LVT).

Belongs to the TER reductase family. As to quaternary structure, monomer.

The catalysed reaction is a 2,3-saturated acyl-[ACP] + NAD(+) = a (2E)-enoyl-[ACP] + NADH + H(+). It participates in lipid metabolism; fatty acid biosynthesis. Functionally, involved in the final reduction of the elongation cycle of fatty acid synthesis (FAS II). Catalyzes the reduction of a carbon-carbon double bond in an enoyl moiety that is covalently linked to an acyl carrier protein (ACP). This chain is Enoyl-[acyl-carrier-protein] reductase [NADH] 2, found in Vibrio vulnificus (strain YJ016).